The following is a 437-amino-acid chain: Aromatic peroxidase fscJ (437 aa).

The N-terminal stretch at 1–19 (MKWLHLLSVVACVADEVYA) is a signal peptide. Residue Cys-83 coordinates heme.

This sequence belongs to the chloroperoxidase family. Heme b is required as a cofactor.

It functions in the pathway secondary metabolite biosynthesis. Its function is as follows. Aromatic peroxidase; part of the fragmented gene cluster that mediates the biosynthesis of fusarochromene, a tryptophan-derived metabolite closely related to a group of mycotoxins including fusarochromanone. The role of fscJ within the pathway has not been identified yet. The first step of the pathway is the epimerization of L-tryptophan to D-tryptophan in the presence of the NRPS-like tryptophan epimerase fscC. D-tryptophan is subsequently hydroxylated by the tryptophan 6-hydroxylase fscE to yield 6-hydroxytryptophan. The pyrrole ring undergoes cleavaged by the tryptophan 2,3-dioxygenase fscD and is finally converted to 4-hydroxykyrunenine by the hydrolase fscH. The NRPS-like oxidoreductase fscA reduces the carboxyl group to primary alcohol and the DMATS-type prenyltransferase fscG performs prenylation, followed by the formation of a chromene ring catalyzed by the oxidoreductase fscI, which leads to desacetylfusarochromene. Epoxidation by fscF and rearrangement reactions of chromene double bonds convert compound desacetylfusarochromene to fusarochromanones. Although specific acetyltransferases were not found near the fsc gene cluster, several predicted enzymes containing the N-acetyltransferase superfamily domain are present in the genome of F.equiseti. These predicted enzymes may have the potential to convert desacetylfusarochromene to fusarochromene. This is Aromatic peroxidase fscJ from Fusarium equiseti (Fusarium scirpi).